We begin with the raw amino-acid sequence, 221 residues long: tRNA (guanine-N(7)-)-methyltransferase (221 aa).

S-adenosyl-L-methionine contacts are provided by Glu51, Glu76, Asp103, and Asp125. The active site involves Asp125. Lys129 and Asp161 together coordinate substrate.

This sequence belongs to the class I-like SAM-binding methyltransferase superfamily. TrmB family.

The enzyme catalyses guanosine(46) in tRNA + S-adenosyl-L-methionine = N(7)-methylguanosine(46) in tRNA + S-adenosyl-L-homocysteine. The protein operates within tRNA modification; N(7)-methylguanine-tRNA biosynthesis. Its function is as follows. Catalyzes the formation of N(7)-methylguanine at position 46 (m7G46) in tRNA. This chain is tRNA (guanine-N(7)-)-methyltransferase, found in Wolbachia pipientis wMel.